Consider the following 904-residue polypeptide: DNA mismatch repair protein MutS (904 aa).

ATP is bound at residue 655 to 662 (GPNMGGKS).

This sequence belongs to the DNA mismatch repair MutS family.

Its function is as follows. This protein is involved in the repair of mismatches in DNA. It is possible that it carries out the mismatch recognition step. This protein has a weak ATPase activity. The chain is DNA mismatch repair protein MutS from Rhizorhabdus wittichii (strain DSM 6014 / CCUG 31198 / JCM 15750 / NBRC 105917 / EY 4224 / RW1) (Sphingomonas wittichii).